Here is a 240-residue protein sequence, read N- to C-terminus: Methylthioribulose-1-phosphate dehydratase (240 aa).

Position 103 (cysteine 103) interacts with substrate. Zn(2+)-binding residues include histidine 121 and histidine 123. Residue glutamate 144 is the Proton donor/acceptor of the active site. Histidine 200 contributes to the Zn(2+) binding site.

Belongs to the aldolase class II family. MtnB subfamily. Requires Zn(2+) as cofactor.

It is found in the cytoplasm. It catalyses the reaction 5-(methylsulfanyl)-D-ribulose 1-phosphate = 5-methylsulfanyl-2,3-dioxopentyl phosphate + H2O. It functions in the pathway amino-acid biosynthesis; L-methionine biosynthesis via salvage pathway; L-methionine from S-methyl-5-thio-alpha-D-ribose 1-phosphate: step 2/6. Its function is as follows. Catalyzes the dehydration of methylthioribulose-1-phosphate (MTRu-1-P) into 2,3-diketo-5-methylthiopentyl-1-phosphate (DK-MTP-1-P). The sequence is that of Methylthioribulose-1-phosphate dehydratase from Komagataella phaffii (strain GS115 / ATCC 20864) (Yeast).